The chain runs to 394 residues: Immune-associated nucleotide-binding protein 12 (394 aa).

The region spanning 45-251 (KPARTLLLVG…YMADLSHEIR (207 aa)) is the AIG1-type G domain. The interval 54–61 (GRSGNGKS) is G1. GTP-binding positions include 54–62 (GRSGNGKSA) and S75. The G2 stretch occupies residues 81 to 85 (GVTTA). The G3 stretch occupies residues 103-106 (DTPG). Residues 173-176 (TNED) form a G4 region. The G5 stretch occupies residues 210-212 (RNR). N211 is a binding site for GTP. Residues 289 to 387 (NQQLRQMMER…KQMATDLQKS (99 aa)) adopt a coiled-coil conformation.

It belongs to the TRAFAC class TrmE-Era-EngA-EngB-Septin-like GTPase superfamily. AIG1/Toc34/Toc159-like paraseptin GTPase family. IAN subfamily.

The sequence is that of Immune-associated nucleotide-binding protein 12 from Arabidopsis thaliana (Mouse-ear cress).